The primary structure comprises 260 residues: Putative protein phosphatase 2C-like protein 44 (260 aa).

The PPM-type phosphatase domain occupies 41-259; sequence YYTVDRLSYA…SSISCVVIRF (219 aa).

This sequence belongs to the PP2C family.

The protein is Putative protein phosphatase 2C-like protein 44 of Arabidopsis thaliana (Mouse-ear cress).